Here is a 507-residue protein sequence, read N- to C-terminus: MAEEQAYHVNKGLECIKALRARPLDPLVVEEALAAWVETSEGQTLDRMSSDEAEADHQDISKPCFPAAGPGKSSMSRCHDQGLGGSNSCDEELGAFIGDSSMHSTEVQHYHVYDHSGEKVEGVEDADSILVQSGADDGVEVWGGDEESENSDVDSGEPDPEGSAPADWGSSPISPATRASDVETVEGDEIQKLLEDQSRIRKMTKAGKTLVVPPIPSQERPTASEKPIKKGTDVKSTSSGTMAESSSTGGATRPALKSQWGPSGPNASAENALASASNVSPTQGSKTESGTTTSRISQSNIEPEDDYDDELFSDIQDIKTALAKLHDDQQIIITRLESLVSLKGEIDSIKKQISKQNISISTIEGHLSSVMIAIPGFGKDPNDPTADVDINPDLRPIIGRDSGRALAEVLKKPASERQSKDTGKLGIESKGLLKKEFQLKPIEKKSSSAIRFVPDGSVASRSVIRSIIKSSHLGEDRKDYLMSLLNDIQGSKDLAQFHQMLVKILKN.

Phosphoserine is present on residues Ser86 and Ser151. Residues 137–160 (DGVEVWGGDEESENSDVDSGEPDP) are compositionally biased toward acidic residues. The tract at residues 137–307 (DGVEVWGGDE…QSNIEPEDDY (171 aa)) is disordered. Composition is skewed to basic and acidic residues over residues 189 to 199 (EIQKLLEDQSR) and 222 to 233 (TASEKPIKKGTD). Low complexity-rich tracts occupy residues 236-252 (STSS…GGAT) and 266-278 (NASA…SASN). Positions 279–301 (VSPTQGSKTESGTTTSRISQSNI) are enriched in polar residues. Residues 304 to 376 (EDDYDDELFS…LSSVMIAIPG (73 aa)) form a multimerization region. The tract at residues 459–507 (ASRSVIRSIIKSSHLGEDRKDYLMSLLNDIQGSKDLAQFHQMLVKILKN) is interaction with the nucleocapsid (N-RNA).

Belongs to the morbillivirus P protein family. Homotetramer. Interacts (via multimerization domain) with polymerase L; this interaction forms the polymerase L-P complex. Interacts (via N-terminus) with N0 (via Ncore); this interaction allows P to chaperon N0 to avoid N polymerization before encapsidation. Interacts (via C-terminus) with N-RNA template; this interaction positions the polymerase on the template for both transcription and replication. In terms of processing, phosphorylation on serines by host CK2 is necessary for the formation of viral factories.

Essential cofactor of the RNA polymerase L that plays a central role in the transcription and replication by forming the polymerase complex with RNA polymerase L and recruiting L to the genomic N-RNA template for RNA synthesis. Also plays a central role in the encapsidation of nascent RNA chains by forming the encapsidation complex with the nucleocapsid protein N (N-P complex). Acts as a chaperone for newly synthesized free N protein, so-called N0, allowing encapsidation of nascent RNA chains during replication. The nucleoprotein protein N prevents excessive phosphorylation of P, which leads to down-regulation of viral transcription/ replication. Participates, together with N, in the formation of viral factories (viroplasms), which are large inclusions in the host cytoplasm where replication takes place. The polypeptide is Phosphoprotein (P/V) (Bos indicus (Zebu)).